The sequence spans 345 residues: Phosphoribosylformylglycinamidine cyclo-ligase (345 aa).

The protein belongs to the AIR synthase family.

Its subcellular location is the cytoplasm. The catalysed reaction is 2-formamido-N(1)-(5-O-phospho-beta-D-ribosyl)acetamidine + ATP = 5-amino-1-(5-phospho-beta-D-ribosyl)imidazole + ADP + phosphate + H(+). The protein operates within purine metabolism; IMP biosynthesis via de novo pathway; 5-amino-1-(5-phospho-D-ribosyl)imidazole from N(2)-formyl-N(1)-(5-phospho-D-ribosyl)glycinamide: step 2/2. In Mannheimia succiniciproducens (strain KCTC 0769BP / MBEL55E), this protein is Phosphoribosylformylglycinamidine cyclo-ligase.